A 78-amino-acid polypeptide reads, in one-letter code: Acyl carrier protein (78 aa).

The 76-residue stretch at 1-76 (MSVAEKVKEI…DAISFIEKKK (76 aa)) folds into the Carrier domain. Residue serine 36 is modified to O-(pantetheine 4'-phosphoryl)serine.

It belongs to the acyl carrier protein (ACP) family. 4'-phosphopantetheine is transferred from CoA to a specific serine of apo-ACP by AcpS. This modification is essential for activity because fatty acids are bound in thioester linkage to the sulfhydryl of the prosthetic group.

Its subcellular location is the cytoplasm. It participates in lipid metabolism; fatty acid biosynthesis. In terms of biological role, carrier of the growing fatty acid chain in fatty acid biosynthesis. The sequence is that of Acyl carrier protein from Solidesulfovibrio magneticus (strain ATCC 700980 / DSM 13731 / RS-1) (Desulfovibrio magneticus).